Reading from the N-terminus, the 810-residue chain is Transmembrane channel-like protein 6 (810 aa).

The tract at residues Met1–Glu26 is disordered. Over Met1–Arg205 the chain is Lumenal. The span at Thr15–Glu26 shows a compositional bias: acidic residues. Residue Thr88 is modified to Phosphothreonine. At Arg93 the chain carries Omega-N-methylarginine. Residue Asn102 is glycosylated (N-linked (GlcNAc...) asparagine). At Thr104 the chain carries Phosphothreonine. Residue Ser136 is modified to Phosphoserine. A helical transmembrane segment spans residues Tyr206–Ala226. The Cytoplasmic portion of the chain corresponds to Arg227 to Thr253. Residues Leu254–Ala274 traverse the membrane as a helical segment. Topologically, residues Ala275 to Met338 are lumenal. N-linked (GlcNAc...) asparagine glycosylation occurs at Asn311. Residues Pro339–Tyr359 form a helical membrane-spanning segment. The Cytoplasmic segment spans residues Ser360–Gln429. The chain crosses the membrane as a helical span at residues Val430–Ala450. The Lumenal segment spans residues Val451 to Gly468. Residues Val469–Phe489 form a helical membrane-spanning segment. The Cytoplasmic portion of the chain corresponds to Arg490–Glu504. A helical membrane pass occupies residues Val505–Tyr525. Residues His526–Met552 are Lumenal-facing. Residues Val553–Ile573 traverse the membrane as a helical segment. The Cytoplasmic portion of the chain corresponds to Ser574–Trp603. A helical transmembrane segment spans residues Leu604–Phe624. The Lumenal portion of the chain corresponds to His625–Thr649. The chain crosses the membrane as a helical span at residues Val650–Ala670. Residues Val671–Thr721 lie on the Cytoplasmic side of the membrane. Residues Phe722–Val742 traverse the membrane as a helical segment. Residues Lys743–Pro810 lie on the Lumenal side of the membrane. The tract at residues Glu775–Pro810 is disordered. The segment covering Ala793–Pro810 has biased composition (basic and acidic residues).

This sequence belongs to the TMC family. In terms of assembly, interacts with TMC8. Interacts and forms a complex with TMC8 and CIB1; the interaction stabilizes each component of the complex. Interacts and forms a complex with TMC8 and SLC30A1/ZNT1; the interaction regulates zinc transport into the ER. As to expression, widely expressed. Highly expressed in thymus, lung and spleen. Expressed in lymphocytes and peripheral lymphocytes. Expressed in small and medium dorsal root ganglion (DRG) neurons.

It is found in the endoplasmic reticulum membrane. Functionally, acts as a regulatory protein involved in the regulation of numerous cellular processes. Together with its homolog TMC8/EVER2, forms a complex with calcium-binding protein CIB1 in lymphocytes and keratynocytes where TMC6 and TMC8 stabilize CIB1 and reciprocally. Together with TMC8, also forms a complex with and activates zinc transporter ZNT1 at the ER membrane of keratynocytes, thereby facilitating zinc uptake into the ER. Down-regulates the activity of transcription factors induced by zinc and cytokines. Also plays a role in thermal sensation by inhibiting the M-channel (KCNQ2-KCNQ3 channel) current in primary sensory neurons. In Mus musculus (Mouse), this protein is Transmembrane channel-like protein 6.